A 771-amino-acid chain; its full sequence is Probable exo-1,4-beta-xylosidase bxlB (771 aa).

An N-terminal signal peptide occupies residues 1 to 25 (MAHITSWHYGNAIALLVSLAPGALS). Asparagine 67 carries N-linked (GlcNAc...) asparagine glycosylation. Residue aspartate 293 is part of the active site. Asparagine 305, asparagine 345, asparagine 423, and asparagine 464 each carry an N-linked (GlcNAc...) asparagine glycan.

Belongs to the glycosyl hydrolase 3 family.

Its subcellular location is the secreted. It carries out the reaction Hydrolysis of (1-&gt;4)-beta-D-xylans, to remove successive D-xylose residues from the non-reducing termini.. It participates in glycan degradation; xylan degradation. Xylan 1,4-beta-xylosidase involved in the hydrolysis of xylan, a major structural heterogeneous polysaccharide found in plant biomass representing the second most abundant polysaccharide in the biosphere, after cellulose. The protein is Probable exo-1,4-beta-xylosidase bxlB (bxlB) of Aspergillus fumigatus (strain CBS 144.89 / FGSC A1163 / CEA10) (Neosartorya fumigata).